Consider the following 136-residue polypeptide: Protein YebF (136 aa).

Residues 1 to 23 (MKKTGLALVLATILLGMMGSVHA) form the signal peptide. In terms of domain architecture, YebF/Cmi spans 30-117 (KVPACIGLNQ…KSGTMTYTGL (88 aa)). The cysteines at positions 34 and 107 are disulfide-linked. The interval 117-136 (LNAQTRPDPQIGLNSQAGPK) is disordered.

Belongs to the YebF family.

It is found in the secreted. The protein is Protein YebF of Yersinia pseudotuberculosis serotype O:1b (strain IP 31758).